The primary structure comprises 63 residues: Large ribosomal subunit protein bL28 (63 aa).

Belongs to the bacterial ribosomal protein bL28 family.

The protein is Large ribosomal subunit protein bL28 of Geobacter metallireducens (strain ATCC 53774 / DSM 7210 / GS-15).